The sequence spans 151 residues: Globin (151 aa).

In terms of domain architecture, Globin spans 2 to 151 (SLSDADKKAL…AAFNETLKKA (150 aa)). Position 100 (His100) interacts with heme b.

Belongs to the globin family.

The chain is Globin from Biomphalaria glabrata (Bloodfluke planorb).